Consider the following 208-residue polypeptide: Protein GrpE (208 aa).

The segment covering 1 to 25 (MVDNKDFNEELKESIQEELDNETKS) has biased composition (basic and acidic residues). Residues 1 to 38 (MVDNKDFNEELKESIQEELDNETKSENPNIDEEVEEVS) are disordered. The segment covering 29–38 (NIDEEVEEVS) has biased composition (acidic residues).

Belongs to the GrpE family. As to quaternary structure, homodimer.

Its subcellular location is the cytoplasm. Participates actively in the response to hyperosmotic and heat shock by preventing the aggregation of stress-denatured proteins, in association with DnaK and GrpE. It is the nucleotide exchange factor for DnaK and may function as a thermosensor. Unfolded proteins bind initially to DnaJ; upon interaction with the DnaJ-bound protein, DnaK hydrolyzes its bound ATP, resulting in the formation of a stable complex. GrpE releases ADP from DnaK; ATP binding to DnaK triggers the release of the substrate protein, thus completing the reaction cycle. Several rounds of ATP-dependent interactions between DnaJ, DnaK and GrpE are required for fully efficient folding. The polypeptide is Protein GrpE (Clostridium perfringens (strain SM101 / Type A)).